A 413-amino-acid chain; its full sequence is Gamma-glutamyl phosphate reductase (413 aa).

The protein belongs to the gamma-glutamyl phosphate reductase family.

The protein resides in the cytoplasm. The catalysed reaction is L-glutamate 5-semialdehyde + phosphate + NADP(+) = L-glutamyl 5-phosphate + NADPH + H(+). The protein operates within amino-acid biosynthesis; L-proline biosynthesis; L-glutamate 5-semialdehyde from L-glutamate: step 2/2. Catalyzes the NADPH-dependent reduction of L-glutamate 5-phosphate into L-glutamate 5-semialdehyde and phosphate. The product spontaneously undergoes cyclization to form 1-pyrroline-5-carboxylate. The protein is Gamma-glutamyl phosphate reductase of Thermus thermophilus (strain ATCC BAA-163 / DSM 7039 / HB27).